Reading from the N-terminus, the 1888-residue chain is E3 ubiquitin-protein ligase UBR3 (1888 aa).

The segment at 1–24 (MAAAAAAAVGGQQPSQPELPAPGL) is disordered. The UBR-type zinc finger occupies 118–189 (ALCGLVWTAN…ESGFCKRHQI (72 aa)). Residues 339–362 (GQVDSSDEDDQDGSQGLGKRKRVK) form a disordered region. Residues S343 and S344 each carry the phosphoserine modification. 2 helical membrane-spanning segments follow: residues 761–781 (MLEG…HLGM) and 919–939 (LLHC…ILMD). 2 disordered regions span residues 1008 to 1028 (APEV…GSLQ) and 1164 to 1186 (VPPK…RQKA). Residues 1016 to 1028 (PASTSSDNLGSLQ) show a composition bias toward polar residues. A coiled-coil region spans residues 1168-1199 (KVTAAEKKTLDKEERRQKARERQQKLLAEFAS). The segment covering 1170–1186 (TAAEKKTLDKEERRQKA) has biased composition (basic and acidic residues). Phosphoserine is present on S1199. An RING-type; degenerate zinc finger spans residues 1306–1364 (DSSCLLAVSIGWEGGVYVQTCGHTLHIDCHKSYMESLRNDQVLQGFSVDKGEFTCPLCR). A helical transmembrane segment spans residues 1806-1826 (QNCGAGTGIFLLINASVIIII).

Belongs to the E3 ubiquitin-protein ligase UBR1-like family. In terms of assembly, interacts with UBE2A and UBE2B.

Its subcellular location is the membrane. It carries out the reaction S-ubiquitinyl-[E2 ubiquitin-conjugating enzyme]-L-cysteine + [acceptor protein]-L-lysine = [E2 ubiquitin-conjugating enzyme]-L-cysteine + N(6)-ubiquitinyl-[acceptor protein]-L-lysine.. The protein operates within protein modification; protein ubiquitination. In terms of biological role, E3 ubiquitin-protein ligase which is a component of the N-end rule pathway. Does not bind to proteins bearing specific N-terminal residues that are destabilizing according to the N-end rule, leading to their ubiquitination and subsequent degradation. May play a role in Shh signaling by mediating the ubiquitination of Kif7. May be important for MYH9 function in certain tissues, possibly by regulating the ubiquitination of MYH9 and consequently affecting its interaction with MYO7A. This Homo sapiens (Human) protein is E3 ubiquitin-protein ligase UBR3 (UBR3).